The chain runs to 270 residues: tRNA pseudouridine synthase A (270 aa).

The active-site Nucleophile is Asp60. The segment at 107–111 (FHARF) is RNA binding. Tyr118 contributes to the substrate binding site. Residues 168-172 (QCQSR) are interaction with tRNA.

The protein belongs to the tRNA pseudouridine synthase TruA family. Homodimer.

It catalyses the reaction uridine(38/39/40) in tRNA = pseudouridine(38/39/40) in tRNA. In terms of biological role, formation of pseudouridine at positions 38, 39 and 40 in the anticodon stem and loop of transfer RNAs. This is tRNA pseudouridine synthase A from Escherichia coli O9:H4 (strain HS).